The sequence spans 93 residues: UPF0147 protein MM_1385 (93 aa).

This sequence belongs to the UPF0147 family.

This chain is UPF0147 protein MM_1385, found in Methanosarcina mazei (strain ATCC BAA-159 / DSM 3647 / Goe1 / Go1 / JCM 11833 / OCM 88) (Methanosarcina frisia).